The following is a 726-amino-acid chain: Mitotic spindle checkpoint protein MAD1 (726 aa).

Residues 1–30 form a disordered region; that stretch reads MILRTPQPKRLRSDAGESPFPTGATGSGNQ. 2 coiled-coil regions span residues 68 to 246 and 272 to 625; these read ADVL…LKLI and SDNS…VFAD.

The protein belongs to the MAD1 family. Homodimer. Part of the mitotic checkpoint complex (MCC). Interacts with MAD2 and NUA.

Its subcellular location is the nucleus envelope. Its function is as follows. Required for the execution of the mitotic checkpoint which monitors the process of kinetochore-spindle attachment and delays the onset of anaphase when this process is not complete. It inhibits the activity of the anaphase promoting complex by sequestering CDC20 until all chromosomes are aligned at the metaphase plate. Required for anchoring MAD2 to the nuclear envelope. The chain is Mitotic spindle checkpoint protein MAD1 from Arabidopsis thaliana (Mouse-ear cress).